The following is a 450-amino-acid chain: MPDTIVAISTPIGTGAISVIRMSGSKSWQICQNVLLRKTKIEPRKAFHNYVKDSDGTILDEVMVIFYKSPNSYTGEDMIEIMCHGGIAVTQSILDTLISHGARPAEPGEFTRRAFLNGKIDLTKAEAVKQIIEASSRKTVKLVAANLAGRLSEIVHKLRETLLGTLAKIEVEFDYPDEILTDPYLIEKELNDAILQIEEILKNAQNRLILSSGIKVVIIGKPNVGKSTLLNTLVKEERAIVTDIPGTTRDLIEVPLMINGISFTLIDTAGIRHSHDEVEKIGVERAIKAADEGNLILFVLDATTPVDENDKKILSLIKEKKYIVVINKIDATDLIDREELKKILGTNTHVLTISALKKEGIQRLEEEIIKSVKDLIQQTDGYITTQRQYEYLASCRKELSDSIEAFKKKLPLDIVAQKVKEALGSIDKLLGTDYTDDLLDRIFKDFCVGK.

Residues arginine 21, glutamate 80, and lysine 119 each contribute to the (6S)-5-formyl-5,6,7,8-tetrahydrofolate site. Positions 213–373 (GIKVVIIGKP…LEEEIIKSVK (161 aa)) constitute a TrmE-type G domain. Residue asparagine 223 participates in K(+) binding. GTP is bound by residues 223 to 228 (NVGKST), 242 to 248 (TDIPGTT), and 267 to 270 (DTAG). Serine 227 lines the Mg(2+) pocket. K(+) is bound by residues threonine 242, isoleucine 244, and threonine 247. Residue threonine 248 coordinates Mg(2+). Lysine 450 provides a ligand contact to (6S)-5-formyl-5,6,7,8-tetrahydrofolate.

This sequence belongs to the TRAFAC class TrmE-Era-EngA-EngB-Septin-like GTPase superfamily. TrmE GTPase family. In terms of assembly, homodimer. Heterotetramer of two MnmE and two MnmG subunits. K(+) serves as cofactor.

The protein resides in the cytoplasm. In terms of biological role, exhibits a very high intrinsic GTPase hydrolysis rate. Involved in the addition of a carboxymethylaminomethyl (cmnm) group at the wobble position (U34) of certain tRNAs, forming tRNA-cmnm(5)s(2)U34. The polypeptide is tRNA modification GTPase MnmE (Pseudothermotoga lettingae (strain ATCC BAA-301 / DSM 14385 / NBRC 107922 / TMO) (Thermotoga lettingae)).